Here is a 238-residue protein sequence, read N- to C-terminus: Purine nucleoside phosphorylase DeoD-type (238 aa).

Residue H4 participates in a purine D-ribonucleoside binding. Residues G20, R24, R43, and 87–90 (RVGS) contribute to the phosphate site. Residues 179 to 181 (EME) and 203 to 204 (SD) contribute to the a purine D-ribonucleoside site. Catalysis depends on D204, which acts as the Proton donor.

Belongs to the PNP/UDP phosphorylase family. In terms of assembly, homohexamer; trimer of homodimers.

The catalysed reaction is a purine D-ribonucleoside + phosphate = a purine nucleobase + alpha-D-ribose 1-phosphate. The enzyme catalyses a purine 2'-deoxy-D-ribonucleoside + phosphate = a purine nucleobase + 2-deoxy-alpha-D-ribose 1-phosphate. Its function is as follows. Catalyzes the reversible phosphorolytic breakdown of the N-glycosidic bond in the beta-(deoxy)ribonucleoside molecules, with the formation of the corresponding free purine bases and pentose-1-phosphate. In Pasteurella multocida (strain Pm70), this protein is Purine nucleoside phosphorylase DeoD-type.